Here is a 352-residue protein sequence, read N- to C-terminus: C-C chemokine receptor type 5 (352 aa).

Residues 1-30 (MDYQVSSPTYDIDYDTSEPCQKINVKQIAA) lie on the Extracellular side of the membrane. Tyr3 carries the post-translational modification Sulfotyrosine. O-linked (GalNAc...) serine glycosylation is found at Ser6 and Ser7. Residues Tyr10 and Tyr14 each carry the sulfotyrosine modification. 2 disulfide bridges follow: Cys20-Cys269 and Cys101-Cys178. A helical transmembrane segment spans residues 31 to 58 (RLLPPLYSLVFIFGFVGNMLVILVLINC). The Cytoplasmic segment spans residues 59–68 (KRLKSMTDIY). A helical membrane pass occupies residues 69–89 (LLNLAISDLFFLLTVPFWAHY). Over 90-102 (AAAQWDFGNTMCQ) the chain is Extracellular. The chain crosses the membrane as a helical span at residues 103-124 (LLTGLYFIGFFSGIFFIILLTI). The Cytoplasmic portion of the chain corresponds to 125–141 (DRYLAIVHAVFALKART). The helical transmembrane segment at 142 to 166 (VTFGVVTSVITWVVAVFASLPGIIF) threads the bilayer. Residues 167 to 198 (TRSQKEGLHYTCSSHFPYSQYQFWKNFQTLKI) lie on the Extracellular side of the membrane. A helical transmembrane segment spans residues 199-218 (VILGLVLPLLVMVICYSGIL). Over 219–235 (KTLLRCRNEKKRHRAVR) the chain is Cytoplasmic. A helical membrane pass occupies residues 236 to 260 (LIFTIMIVYFLFWAPYNIVLLLNTF). At 261–277 (QEFFGLNNCSSSNRLDQ) the chain is on the extracellular side. Residues 278-301 (AMQVTETLGMTHCCINPIIYAFVG) form a helical membrane-spanning segment. The Cytoplasmic portion of the chain corresponds to 302–352 (EKFRNYLLVFFQKHIAKHFCKCCSIFQQEAPERASSVYTRSTGEQEISVGL). Residues Cys321, Cys323, and Cys324 are each lipidated (S-palmitoyl cysteine). 4 positions are modified to phosphoserine; by BARK1: Ser336, Ser337, Ser342, and Ser349.

The protein belongs to the G-protein coupled receptor 1 family. As to quaternary structure, interacts with PRAF2. Efficient ligand binding to CCL3/MIP-1alpha and CCL4/MIP-1beta requires sulfation, O-glycosylation and sialic acid modifications. Glycosylation on Ser-6 is required for efficient binding of CCL4. Interacts with GRK2. Interacts with ARRB1 and ARRB2. Interacts with CNIH4. Interacts with S100A4; this interaction stimulates T-lymphocyte chemotaxis. Post-translationally, sulfated on at least 2 of the N-terminal tyrosines. Sulfation is required for efficient binding of the chemokines, CCL3 and CCL4. In terms of processing, palmitoylation in the C-terminal is important for cell surface expression. Phosphorylation on serine residues in the C-terminal is stimulated by binding CC chemokines especially by APO-RANTES. Post-translationally, O-glycosylated, but not N-glycosylated. Ser-6 appears to be the major site even if Ser-7 may be also O-glycosylated. Also sialylated glycans present which contribute to chemokine binding. Thr-16 and Ser-17 may also be glycosylated and, if so, with small moieties such as a T-antigen.

It is found in the cell membrane. In terms of biological role, receptor for a number of inflammatory CC-chemokines including CCL3/MIP-1-alpha, CCL4/MIP-1-beta and RANTES and subsequently transduces a signal by increasing the intracellular calcium ion level. May play a role in the control of granulocytic lineage proliferation or differentiation. Participates in T-lymphocyte migration to the infection site by acting as a chemotactic receptor. In Nomascus leucogenys (Northern white-cheeked gibbon), this protein is C-C chemokine receptor type 5 (CCR5).